The primary structure comprises 508 residues: MNIFSHANLGTTEERGDDAKRTILAGTDIVGDILKTTLGPKGMLKMLKGQHVNVTNDGAFILNNLMIDSPSARILIGSSTGQDWEEGDGTTSVAILASLLVKEAGKLEMHPTKILRGYRMAQAKCEEILSSISFEATKEDLLKLVRTTLCSKVLRYDLERFCEICVNAVEKLEGRNDLNLIQIIKCSGKLEDSYLDDGFLLKKDIRIDDVVNPRVLIANTSMDQDKIKVFGAKINVNSVGELEEMEKAEKIKIKGKVERISQNGVNVFVNRQLVYDYPLQLLRMKGIQAIEHADFDGVERLNNVLGGKILSTFDNMDESCYGTCESIRNVHVGNERMIKFSGVRSGASTIVLCGSSKEMLDEAERSVHDALCVLAKIKEDPRVIYGGGSSEMAMAVGLNKYAMEVPGAESDAILAFSSALQQIPKILADNGGYNGESIKASLRAEHNSGRTSYGVNVRNGSIGCMKEAGVVDSLRIKHRVVTAASETAQMIIKCDAIVKCKPRERTRE.

The protein belongs to the TCP-1 chaperonin family. In terms of assembly, component of the T-complex protein 1 (TCP1) complex.

It is found in the cytoplasm. Functionally, molecular chaperone; assists the folding of proteins upon ATP hydrolysis. This chain is T-complex protein 1 subunit beta (CCT2), found in Encephalitozoon cuniculi (strain GB-M1) (Microsporidian parasite).